The primary structure comprises 129 residues: UPF0325 protein ESA_03178 (129 aa).

This sequence belongs to the UPF0325 family.

This Cronobacter sakazakii (strain ATCC BAA-894) (Enterobacter sakazakii) protein is UPF0325 protein ESA_03178.